A 213-amino-acid chain; its full sequence is Ribosomal RNA large subunit methyltransferase E (213 aa).

Positions 60, 62, 80, 96, and 121 each coordinate S-adenosyl-L-methionine. Catalysis depends on lysine 161, which acts as the Proton acceptor.

The protein belongs to the class I-like SAM-binding methyltransferase superfamily. RNA methyltransferase RlmE family.

The protein resides in the cytoplasm. The catalysed reaction is uridine(2552) in 23S rRNA + S-adenosyl-L-methionine = 2'-O-methyluridine(2552) in 23S rRNA + S-adenosyl-L-homocysteine + H(+). In terms of biological role, specifically methylates the uridine in position 2552 of 23S rRNA at the 2'-O position of the ribose in the fully assembled 50S ribosomal subunit. The chain is Ribosomal RNA large subunit methyltransferase E from Xylella fastidiosa (strain M23).